The following is a 339-amino-acid chain: Ketol-acid reductoisomerase (NADP(+)) (339 aa).

Positions 1 to 182 constitute a KARI N-terminal Rossmann domain; sequence MRVYYDRDAD…GGGRAGIIET (182 aa). NADP(+)-binding positions include 24–27, arginine 48, serine 51, threonine 53, and 83–86; these read YGSQ and DELQ. Residue histidine 108 is part of the active site. Residue glycine 134 participates in NADP(+) binding. Residues 183–328 form the KARI C-terminal knotted domain; the sequence is TFREECETDL…AKLREMMPWI (146 aa). The Mg(2+) site is built by aspartate 191, glutamate 195, glutamate 227, and glutamate 231. Serine 252 is a binding site for substrate.

The protein belongs to the ketol-acid reductoisomerase family. Mg(2+) is required as a cofactor.

The catalysed reaction is (2R)-2,3-dihydroxy-3-methylbutanoate + NADP(+) = (2S)-2-acetolactate + NADPH + H(+). It catalyses the reaction (2R,3R)-2,3-dihydroxy-3-methylpentanoate + NADP(+) = (S)-2-ethyl-2-hydroxy-3-oxobutanoate + NADPH + H(+). It participates in amino-acid biosynthesis; L-isoleucine biosynthesis; L-isoleucine from 2-oxobutanoate: step 2/4. It functions in the pathway amino-acid biosynthesis; L-valine biosynthesis; L-valine from pyruvate: step 2/4. Its function is as follows. Involved in the biosynthesis of branched-chain amino acids (BCAA). Catalyzes an alkyl-migration followed by a ketol-acid reduction of (S)-2-acetolactate (S2AL) to yield (R)-2,3-dihydroxy-isovalerate. In the isomerase reaction, S2AL is rearranged via a Mg-dependent methyl migration to produce 3-hydroxy-3-methyl-2-ketobutyrate (HMKB). In the reductase reaction, this 2-ketoacid undergoes a metal-dependent reduction by NADPH to yield (R)-2,3-dihydroxy-isovalerate. This is Ketol-acid reductoisomerase (NADP(+)) from Rhodopseudomonas palustris (strain BisA53).